The primary structure comprises 734 residues: Photosystem I P700 chlorophyll a apoprotein A2 (734 aa).

Helical transmembrane passes span 46–69, 135–158, 175–199, 273–291, 330–353, 369–395, 417–439, and 517–535; these read IFASHFGQLAIIFLWTSGNLFHVA, LYTGALFLLFLSAISLIAGWLHLQ, LNHHLSGLFGVSSLAWTGHLVHVAI, MAHHHLAIAFIFLVAGHMY, IHFQLGLALASLGVITSLVAQHMY, AALYTHHQYIAGFIMTGAFAHGAIFFI, AIKSHLSWASLFLGFHTLGLYVH, and FLVHHAIALGLHTTTLILV. [4Fe-4S] cluster contacts are provided by cysteine 559 and cysteine 568. Transmembrane regions (helical) follow at residues 575–596 and 643–665; these read AFYLAVFWMLNTIGWVTFYWHW and LSVWAWMFLFGHLVWATGFMFLI. Chlorophyll a contacts are provided by histidine 654, methionine 662, and tyrosine 670. Tryptophan 671 lines the phylloquinone pocket. A helical transmembrane segment spans residues 707–727; it reads LVGLAHFSVGYIFTYAAFLIA.

This sequence belongs to the PsaA/PsaB family. As to quaternary structure, the PsaA/B heterodimer binds the P700 chlorophyll special pair and subsequent electron acceptors. PSI consists of a core antenna complex that captures photons, and an electron transfer chain that converts photonic excitation into a charge separation. The eukaryotic PSI reaction center is composed of at least 11 subunits. P700 is a chlorophyll a/chlorophyll a' dimer, A0 is one or more chlorophyll a, A1 is one or both phylloquinones and FX is a shared 4Fe-4S iron-sulfur center. is required as a cofactor.

The protein resides in the plastid. Its subcellular location is the chloroplast thylakoid membrane. The enzyme catalyses reduced [plastocyanin] + hnu + oxidized [2Fe-2S]-[ferredoxin] = oxidized [plastocyanin] + reduced [2Fe-2S]-[ferredoxin]. PsaA and PsaB bind P700, the primary electron donor of photosystem I (PSI), as well as the electron acceptors A0, A1 and FX. PSI is a plastocyanin-ferredoxin oxidoreductase, converting photonic excitation into a charge separation, which transfers an electron from the donor P700 chlorophyll pair to the spectroscopically characterized acceptors A0, A1, FX, FA and FB in turn. Oxidized P700 is reduced on the lumenal side of the thylakoid membrane by plastocyanin. The protein is Photosystem I P700 chlorophyll a apoprotein A2 of Chloranthus spicatus (Chulantree).